The sequence spans 271 residues: Sulfur carrier protein FdhD (271 aa).

The Cysteine persulfide intermediate role is filled by Cys114.

It belongs to the FdhD family.

The protein localises to the cytoplasm. Its function is as follows. Required for formate dehydrogenase (FDH) activity. Acts as a sulfur carrier protein that transfers sulfur from IscS to the molybdenum cofactor prior to its insertion into FDH. The chain is Sulfur carrier protein FdhD from Agrobacterium fabrum (strain C58 / ATCC 33970) (Agrobacterium tumefaciens (strain C58)).